Reading from the N-terminus, the 554-residue chain is uncharacterized protein (554 aa).

4 disordered regions span residues 1 to 127 (MTTH…NYND), 139 to 173 (IEDDEEYEEIGDEESSSGIGGDSEFNDSLNGSKAG), 293 to 395 (NNNN…PLSE), and 416 to 509 (FGFS…RKIR). Composition is skewed to low complexity over residues 9–30 (SSSNSSSNNINNNNNNNNNNNI), 46–55 (DPTSSSSPTN), and 63–125 (SNSN…LINY). Over residues 139 to 153 (IEDDEEYEEIGDEES) the composition is skewed to acidic residues. Polar residues predominate over residues 164–173 (NDSLNGSKAG). Low complexity-rich tracts occupy residues 293 to 387 (NNNN…CSSN), 416 to 449 (FGFSLSSPTTSSSNNSSNNNNNNNNSNQFFSSIS), and 461 to 484 (SPPLQSLQSIQPPISQLNNNNNNH). Basic residues predominate over residues 485-508 (HNNHHQNHHHQNHNHQHHSKKRKI).

This is an uncharacterized protein from Dictyostelium discoideum (Social amoeba).